We begin with the raw amino-acid sequence, 393 residues long: S-adenosylmethionine synthase (393 aa).

Glutamate 9 is a Mg(2+) binding site. Histidine 15 lines the ATP pocket. Glutamate 43 serves as a coordination point for K(+). The L-methionine site is built by glutamate 56 and glutamine 99. Residues 167–169 (DGK), 235–238 (SGRF), aspartate 246, 252–253 (RK), alanine 269, lysine 273, and lysine 277 each bind ATP. An L-methionine-binding site is contributed by aspartate 246. Lysine 277 contacts L-methionine.

The protein belongs to the AdoMet synthase family. Homotetramer. Requires Mn(2+) as cofactor. Mg(2+) serves as cofactor. The cofactor is Co(2+). It depends on K(+) as a cofactor.

It is found in the cytoplasm. The catalysed reaction is L-methionine + ATP + H2O = S-adenosyl-L-methionine + phosphate + diphosphate. It participates in amino-acid biosynthesis; S-adenosyl-L-methionine biosynthesis; S-adenosyl-L-methionine from L-methionine: step 1/1. Catalyzes the formation of S-adenosylmethionine from methionine and ATP. The reaction comprises two steps that are both catalyzed by the same enzyme: formation of S-adenosylmethionine (AdoMet) and triphosphate, and subsequent hydrolysis of the triphosphate. In Camellia sinensis (Tea plant), this protein is S-adenosylmethionine synthase (SAM).